A 264-amino-acid chain; its full sequence is 3-methyl-2-oxobutanoate hydroxymethyltransferase (264 aa).

Mg(2+) contacts are provided by aspartate 42 and aspartate 81. 3-methyl-2-oxobutanoate is bound by residues 42 to 43 (DS), aspartate 81, and lysine 110. Glutamate 112 lines the Mg(2+) pocket. Glutamate 179 functions as the Proton acceptor in the catalytic mechanism.

This sequence belongs to the PanB family. As to quaternary structure, homodecamer; pentamer of dimers. It depends on Mg(2+) as a cofactor.

The protein resides in the cytoplasm. It catalyses the reaction 3-methyl-2-oxobutanoate + (6R)-5,10-methylene-5,6,7,8-tetrahydrofolate + H2O = 2-dehydropantoate + (6S)-5,6,7,8-tetrahydrofolate. It participates in cofactor biosynthesis; (R)-pantothenate biosynthesis; (R)-pantoate from 3-methyl-2-oxobutanoate: step 1/2. Its function is as follows. Catalyzes the reversible reaction in which hydroxymethyl group from 5,10-methylenetetrahydrofolate is transferred onto alpha-ketoisovalerate to form ketopantoate. In Francisella tularensis subsp. tularensis (strain FSC 198), this protein is 3-methyl-2-oxobutanoate hydroxymethyltransferase.